The chain runs to 278 residues: Probable septum site-determining protein MinC (278 aa).

The disordered stretch occupies residues 104–167; it reads RTQQSVDPAP…ASHTPAAPQS (64 aa).

Belongs to the MinC family. Interacts with MinD and FtsZ.

Functionally, cell division inhibitor that blocks the formation of polar Z ring septums. Rapidly oscillates between the poles of the cell to destabilize FtsZ filaments that have formed before they mature into polar Z rings. Prevents FtsZ polymerization. This Bordetella avium (strain 197N) protein is Probable septum site-determining protein MinC.